Here is a 316-residue protein sequence, read N- to C-terminus: NAC domain-containing protein 22 (316 aa).

An NAC domain is found at 17-170 (DLPGFRFHPT…DMVLCKIYRK (154 aa)). A DNA-binding region spans residues 117–176 (IGLKKTLVFYQGRAPRGTKTDWVMNEYRLPDYGAARAAAPPPKEDMVLCKIYRKATPLKE). The disordered stretch occupies residues 229–260 (QSSSSSAAPSGSSSKNGGAGAPREAKKEEADV). The span at 230–244 (SSSSSAAPSGSSSKN) shows a compositional bias: low complexity.

It localises to the nucleus. In terms of biological role, transcription activator that binds sequence-specific DNA motifs. Involved in stress response. Plays a positive role in drought and salt stress tolerance through the modulation of abscisic acid-mediated signaling. The chain is NAC domain-containing protein 22 from Oryza sativa subsp. japonica (Rice).